The sequence spans 279 residues: 4-diphosphocytidyl-2-C-methyl-D-erythritol kinase (279 aa).

Residue Lys11 is part of the active site. Residue 95–105 coordinates ATP; that stretch reads PVAAGLGGGSS. Asp137 is a catalytic residue.

It belongs to the GHMP kinase family. IspE subfamily.

The enzyme catalyses 4-CDP-2-C-methyl-D-erythritol + ATP = 4-CDP-2-C-methyl-D-erythritol 2-phosphate + ADP + H(+). Its pathway is isoprenoid biosynthesis; isopentenyl diphosphate biosynthesis via DXP pathway; isopentenyl diphosphate from 1-deoxy-D-xylulose 5-phosphate: step 3/6. In terms of biological role, catalyzes the phosphorylation of the position 2 hydroxy group of 4-diphosphocytidyl-2C-methyl-D-erythritol. This chain is 4-diphosphocytidyl-2-C-methyl-D-erythritol kinase, found in Geotalea daltonii (strain DSM 22248 / JCM 15807 / FRC-32) (Geobacter daltonii).